Consider the following 397-residue polypeptide: Ribosomal RNA large subunit methyltransferase I (397 aa).

The PUA domain occupies 2-81 (STTVYLQKDR…EQIDTEFFVR (80 aa)).

Belongs to the methyltransferase superfamily. RlmI family.

Its subcellular location is the cytoplasm. It catalyses the reaction cytidine(1962) in 23S rRNA + S-adenosyl-L-methionine = 5-methylcytidine(1962) in 23S rRNA + S-adenosyl-L-homocysteine + H(+). Its function is as follows. Specifically methylates the cytosine at position 1962 (m5C1962) of 23S rRNA. The protein is Ribosomal RNA large subunit methyltransferase I of Tolumonas auensis (strain DSM 9187 / NBRC 110442 / TA 4).